A 556-amino-acid polypeptide reads, in one-letter code: Arginine--tRNA ligase (556 aa).

The 'HIGH' region signature appears at 134 to 144; it reads ANPTGPLHIGH.

This sequence belongs to the class-I aminoacyl-tRNA synthetase family. Monomer.

The protein localises to the cytoplasm. It carries out the reaction tRNA(Arg) + L-arginine + ATP = L-arginyl-tRNA(Arg) + AMP + diphosphate. The polypeptide is Arginine--tRNA ligase (Micrococcus luteus (strain ATCC 4698 / DSM 20030 / JCM 1464 / CCM 169 / CCUG 5858 / IAM 1056 / NBRC 3333 / NCIMB 9278 / NCTC 2665 / VKM Ac-2230) (Micrococcus lysodeikticus)).